Reading from the N-terminus, the 329-residue chain is Acrosin (329 aa).

A signal peptide spans 1–17; it reads MLPTAVLLVLAVSVVAR. The N-linked (GlcNAc...) asparagine glycan is linked to asparagine 19. 6 cysteine pairs are disulfide-bonded: cysteine 22–cysteine 152, cysteine 26–cysteine 160, cysteine 71–cysteine 87, cysteine 175–cysteine 244, cysteine 207–cysteine 223, and cysteine 234–cysteine 264. The Peptidase S1 domain occupies 40 to 288; it reads IIGGQDAAHG…YLNWIASKIG (249 aa). Catalysis depends on charge relay system residues histidine 86 and aspartate 140. A glycan (N-linked (GlcNAc...) asparagine) is linked at asparagine 208. Serine 238 functions as the Charge relay system in the catalytic mechanism.

The protein belongs to the peptidase S1 family. In terms of assembly, heavy chain (catalytic) and a light chain linked by two disulfide bonds. Forms a heterodimer with SERPINA5.

The enzyme catalyses Preferential cleavage: Arg-|-Xaa, Lys-|-Xaa.. Inhibited by SERPINA5. Functionally, acrosin is the major protease of mammalian spermatozoa. It is a serine protease of trypsin-like cleavage specificity, it is synthesized in a zymogen form, proacrosin and stored in the acrosome. The sequence is that of Acrosin (ACR) from Ovis aries (Sheep).